Here is a 101-residue protein sequence, read N- to C-terminus: Small ribosomal subunit protein uS14 (101 aa).

This sequence belongs to the universal ribosomal protein uS14 family. Part of the 30S ribosomal subunit. Contacts proteins S3 and S10.

Binds 16S rRNA, required for the assembly of 30S particles and may also be responsible for determining the conformation of the 16S rRNA at the A site. This Shewanella loihica (strain ATCC BAA-1088 / PV-4) protein is Small ribosomal subunit protein uS14.